Consider the following 440-residue polypeptide: Diaminopimelate decarboxylase (440 aa).

K61 carries the post-translational modification N6-(pyridoxal phosphate)lysine. Pyridoxal 5'-phosphate contacts are provided by residues G234 and 275–278 (EPGR). Residues R278, R314, and Y318 each coordinate substrate. Residue C348 is the Proton donor of the active site. Positions 349 and 384 each coordinate substrate. Y384 contributes to the pyridoxal 5'-phosphate binding site. Over residues 421 to 431 (LAPELEPGPAL) the composition is skewed to low complexity. The segment at 421–440 (LAPELEPGPALSPRPSRDPR) is disordered.

It belongs to the Orn/Lys/Arg decarboxylase class-II family. LysA subfamily. Homodimer. Pyridoxal 5'-phosphate serves as cofactor.

The catalysed reaction is meso-2,6-diaminopimelate + H(+) = L-lysine + CO2. Its pathway is amino-acid biosynthesis; L-lysine biosynthesis via DAP pathway; L-lysine from DL-2,6-diaminopimelate: step 1/1. Specifically catalyzes the decarboxylation of meso-diaminopimelate (meso-DAP) to L-lysine. The protein is Diaminopimelate decarboxylase of Streptomyces coelicolor (strain ATCC BAA-471 / A3(2) / M145).